The sequence spans 64 residues: Alpha-conotoxin Lt14.1 (64 aa).

The N-terminal stretch at 1–20 (MKLSVMFIVFLMLTMPMTCA) is a signal peptide. Positions 21-50 (GISRSATNGGEADVRAHDKAANLMALLQER) are excised as a propeptide. Intrachain disulfides connect Cys-52–Cys-60 and Cys-56–Cys-63. Cys-63 carries the post-translational modification Cysteine amide.

The protein belongs to the conotoxin L superfamily. Post-translationally, may contain a 4-hydroxyproline. As to expression, expressed by the venom duct.

The protein resides in the secreted. In terms of biological role, alpha-conotoxins act on postsynaptic membranes, they bind to the nicotinic acetylcholine receptors (nAChR) and thus inhibit them. This synthetic peptide displays analgesic activity in a hot plate assay. Analgesia is also observed against second phase pain in formalin-induced inflammatory pain model, and in a rat model of mechanically-induced pain. Effects downstream of nAChR are inhibition of calcium influx, inhibition of ERK1/2 phosphorylation and inhibition of c-fos/NOS expression. Genes associated with drug dependence are not up-regulated by this toxin. Treatment with this toxin reversed morphine withdrawal symptoms in mice. The chain is Alpha-conotoxin Lt14.1 from Conus litteratus (Lettered cone).